Here is a 114-residue protein sequence, read N- to C-terminus: Nucleoid-associated protein slr1847 (114 aa).

This sequence belongs to the YbaB/EbfC family. As to quaternary structure, homodimer.

The protein localises to the cytoplasm. It localises to the nucleoid. Binds to DNA and alters its conformation. May be involved in regulation of gene expression, nucleoid organization and DNA protection. The protein is Nucleoid-associated protein slr1847 of Synechocystis sp. (strain ATCC 27184 / PCC 6803 / Kazusa).